The following is a 134-amino-acid chain: Cell division protein SepF 1 (134 aa).

This sequence belongs to the SepF family. Homodimer. Interacts with FtsZ.

It localises to the cytoplasm. In terms of biological role, cell division protein that is part of the divisome complex and is recruited early to the Z-ring. Probably stimulates Z-ring formation, perhaps through the cross-linking of FtsZ protofilaments. Its function overlaps with FtsA. The polypeptide is Cell division protein SepF 1 (Streptomyces avermitilis (strain ATCC 31267 / DSM 46492 / JCM 5070 / NBRC 14893 / NCIMB 12804 / NRRL 8165 / MA-4680)).